The chain runs to 1131 residues: PPi-type phosphoenolpyruvate carboxykinase (1131 aa).

Belongs to the PPi-type phosphoenolpyruvate carboxykinase family. In terms of assembly, monomer and trimer; forms heterotrimers with PEPCK2 and PEPCK3.

The enzyme catalyses oxaloacetate + diphosphate = phosphoenolpyruvate + phosphate + CO2. In terms of biological role, inorganic pyrophosphate (PPi)-dependent phosphoenolpyruvate carboxykinase, which regulates the carbon flow of the central metabolism by fixing CO(2) to phosphoenolpyruvate to produce oxaloacetate. Can also produce pyruvate and diphosphate from phosphoenolpyruvate and phosphate. This Propionibacterium freudenreichii subsp. freudenreichii protein is PPi-type phosphoenolpyruvate carboxykinase.